Consider the following 737-residue polypeptide: Catalase-peroxidase (737 aa).

A cross-link (tryptophyl-tyrosyl-methioninium (Trp-Tyr) (with M-251)) is located at residues 102–225 (WHSAGTYRTG…LGAVQMGLIY (124 aa)). The active-site Proton acceptor is the His103. Residues 225 to 251 (YVNPEGPNGKPDPLAAAHDIRETFARM) constitute a cross-link (tryptophyl-tyrosyl-methioninium (Tyr-Met) (with W-102)). A heme b-binding site is contributed by His266.

This sequence belongs to the peroxidase family. Peroxidase/catalase subfamily. In terms of assembly, homodimer or homotetramer. It depends on heme b as a cofactor. Formation of the three residue Trp-Tyr-Met cross-link is important for the catalase, but not the peroxidase activity of the enzyme.

It catalyses the reaction H2O2 + AH2 = A + 2 H2O. The catalysed reaction is 2 H2O2 = O2 + 2 H2O. Bifunctional enzyme with both catalase and broad-spectrum peroxidase activity. The sequence is that of Catalase-peroxidase from Caulobacter sp. (strain K31).